The chain runs to 152 residues: Snaclec lebecin subunit alpha (152 aa).

The N-terminal stretch at 1-23 is a signal peptide; it reads MGRSISVSFGLLVVFLSLSGTGA. Cystine bridges form between C27/C38, C54/C147, and C122/C139. The region spanning 34–148 is the C-type lectin domain; sequence YEGGCYYVFD…CELAYHFICS (115 aa).

In terms of assembly, heterodimer with the beta subunit (AC W5XCJ6); disulfide-linked. In terms of tissue distribution, expressed by the venom gland.

Its subcellular location is the secreted. Its function is as follows. Inhibits human breast cancer cells (MDA-MB231) migration and proliferation, as well as their adhesion to fibrinogen and fibronectin. This inhibition may be due to the binding to receptors of the integrin family, probably alpha-v/beta-3 (ITGAV/ITGB3) (40% inhibition of cell adhesion) and alpha-5/beta-1 (ITGA5/ITGB1) (by comparison with lebectin). The polypeptide is Snaclec lebecin subunit alpha (Macrovipera lebetinus (Levantine viper)).